A 203-amino-acid polypeptide reads, in one-letter code: GTP cyclohydrolase 1 (203 aa).

Residues C87, H90, and C158 each coordinate Zn(2+).

Belongs to the GTP cyclohydrolase I family. Toroid-shaped homodecamer, composed of two pentamers of five dimers.

The catalysed reaction is GTP + H2O = 7,8-dihydroneopterin 3'-triphosphate + formate + H(+). The protein operates within cofactor biosynthesis; 7,8-dihydroneopterin triphosphate biosynthesis; 7,8-dihydroneopterin triphosphate from GTP: step 1/1. This chain is GTP cyclohydrolase 1, found in Xylella fastidiosa (strain 9a5c).